A 511-amino-acid polypeptide reads, in one-letter code: Phospho-2-dehydro-3-deoxyheptonate aldolase 1, chloroplastic (511 aa).

The N-terminal 49 residues, 1–49 (MALSNTLSLSSSKSLVQSHLLHNPTPQPRFSLFPTTQHGRRHPISAVHA), are a transit peptide targeting the chloroplast.

The protein belongs to the class-II DAHP synthase family. Higher levels seen in the cotyledons than in the leaves and flowers. Lower levels seen in the roots and stems.

It localises to the plastid. The protein resides in the chloroplast. It catalyses the reaction D-erythrose 4-phosphate + phosphoenolpyruvate + H2O = 7-phospho-2-dehydro-3-deoxy-D-arabino-heptonate + phosphate. Its pathway is metabolic intermediate biosynthesis; chorismate biosynthesis; chorismate from D-erythrose 4-phosphate and phosphoenolpyruvate: step 1/7. May be involved in the synthesis of secondary metabolites derived from intermediates of the pre-chorismate pathway up to shikimate. The sequence is that of Phospho-2-dehydro-3-deoxyheptonate aldolase 1, chloroplastic from Solanum lycopersicum (Tomato).